A 671-amino-acid polypeptide reads, in one-letter code: DNA ligase (671 aa).

NAD(+) is bound by residues 32–36 (DAEYD), 81–82 (SL), and glutamate 113. Lysine 115 acts as the N6-AMP-lysine intermediate in catalysis. Residues arginine 136, glutamate 173, lysine 290, and lysine 314 each coordinate NAD(+). The Zn(2+) site is built by cysteine 408, cysteine 411, cysteine 426, and cysteine 432. In terms of domain architecture, BRCT spans 593 to 671 (EIDSPFAGKT…EAEMLRLLGV (79 aa)).

This sequence belongs to the NAD-dependent DNA ligase family. LigA subfamily. Mg(2+) is required as a cofactor. Mn(2+) serves as cofactor.

It catalyses the reaction NAD(+) + (deoxyribonucleotide)n-3'-hydroxyl + 5'-phospho-(deoxyribonucleotide)m = (deoxyribonucleotide)n+m + AMP + beta-nicotinamide D-nucleotide.. DNA ligase that catalyzes the formation of phosphodiester linkages between 5'-phosphoryl and 3'-hydroxyl groups in double-stranded DNA using NAD as a coenzyme and as the energy source for the reaction. It is essential for DNA replication and repair of damaged DNA. The sequence is that of DNA ligase from Salmonella arizonae (strain ATCC BAA-731 / CDC346-86 / RSK2980).